A 336-amino-acid polypeptide reads, in one-letter code: Inositol 2-dehydrogenase (336 aa).

It belongs to the Gfo/Idh/MocA family. In terms of assembly, homotetramer.

It carries out the reaction myo-inositol + NAD(+) = scyllo-inosose + NADH + H(+). In terms of biological role, involved in the oxidation of myo-inositol (MI) to 2-keto-myo-inositol (2KMI or 2-inosose). The chain is Inositol 2-dehydrogenase from Salmonella agona (strain SL483).